The following is a 272-amino-acid chain: Ribonuclease HII (272 aa).

An RNase H type-2 domain is found at 87 to 272; that stretch reads KYVAGVDEVG…HRMSFLKNIL (186 aa). A divalent metal cation contacts are provided by Asp-93, Glu-94, and Asp-188.

Belongs to the RNase HII family. Mn(2+) serves as cofactor. Requires Mg(2+) as cofactor.

Its subcellular location is the cytoplasm. The enzyme catalyses Endonucleolytic cleavage to 5'-phosphomonoester.. Its function is as follows. Endonuclease that specifically degrades the RNA of RNA-DNA hybrids. The polypeptide is Ribonuclease HII (Clostridium perfringens (strain SM101 / Type A)).